A 305-amino-acid polypeptide reads, in one-letter code: Putative monooxygenase p33MONOX (305 aa).

The disordered stretch occupies residues 37 to 56 (LEDPAPMTPPPSDMGSVPWK). Residue T44 is modified to Phosphothreonine. Residues 67-77 (LAKVEEGEASL) carry the Flavin-containing monooxygenase motif motif. 2 disordered regions span residues 158-236 (QSGE…KYDS) and 259-305 (QANR…PTGF). The segment covering 169–183 (PASAQSTPSTTPHSS) has biased composition (low complexity). T175 is subject to Phosphothreonine. A phosphoserine mark is found at S182 and S183. The segment covering 193–210 (TSGSSTALPGPNPSTMDS) has biased composition (polar residues).

This sequence belongs to the P33MONOX family. As to quaternary structure, interacts with NELFB, NOL12 and PRNP. In terms of tissue distribution, down-regulated in the occipital lobe of an early stage Alzheimer disease patients.

It localises to the cytoplasm. Potential NADPH-dependent oxidoreductase. May be involved in the regulation of neuronal survival, differentiation and axonal outgrowth. This is Putative monooxygenase p33MONOX (KIAA1191) from Homo sapiens (Human).